A 71-amino-acid polypeptide reads, in one-letter code: UPF0346 protein BCB4264_A2283 (71 aa).

This sequence belongs to the UPF0346 family.

This Bacillus cereus (strain B4264) protein is UPF0346 protein BCB4264_A2283.